The sequence spans 184 residues: Threonylcarbamoyl-AMP synthase (184 aa).

In terms of domain architecture, YrdC-like spans 1-184 (MNNLLAVIEL…IFTQHIFRQG (184 aa)).

It belongs to the SUA5 family. TsaC subfamily.

It localises to the cytoplasm. The catalysed reaction is L-threonine + hydrogencarbonate + ATP = L-threonylcarbamoyladenylate + diphosphate + H2O. Its function is as follows. Required for the formation of a threonylcarbamoyl group on adenosine at position 37 (t(6)A37) in tRNAs that read codons beginning with adenine. Catalyzes the conversion of L-threonine, HCO(3)(-)/CO(2) and ATP to give threonylcarbamoyl-AMP (TC-AMP) as the acyladenylate intermediate, with the release of diphosphate. The chain is Threonylcarbamoyl-AMP synthase from Haemophilus ducreyi (strain 35000HP / ATCC 700724).